The primary structure comprises 302 residues: MNQTAINRADVRTRFIFDDMPVRGLHVRLENVWQHIVKQKNYPAAIRRALGELLAAGVLLSGNLKNEGTLIVQVQGRGRLKMLVAEAASDRTVRATARWDETAEIADDESLGDLLGEGGVFVLTLQPKDGEPWQGVVPLEGGGIAQMLVNYMKRSEQLDTHIVLSASDEAAGGLLVQRLPEEVLDEEAWEHVSTLARTLTAEELAGLDAQHVLYRLFHETPPRVFEPETFEFSCTCSRGKVSDMLLMLGGEEVGGVVVEQGSIEVDCDFCHSKYVFDETDVNALFGEDVVGVAKGLPRHTVQ.

2 disulfides stabilise this stretch: C234–C236 and C267–C270.

The protein belongs to the HSP33 family. Under oxidizing conditions two disulfide bonds are formed involving the reactive cysteines. Under reducing conditions zinc is bound to the reactive cysteines and the protein is inactive.

Its subcellular location is the cytoplasm. Redox regulated molecular chaperone. Protects both thermally unfolding and oxidatively damaged proteins from irreversible aggregation. Plays an important role in the bacterial defense system toward oxidative stress. The polypeptide is 33 kDa chaperonin (Neisseria meningitidis serogroup B (strain ATCC BAA-335 / MC58)).